The primary structure comprises 152 residues: Lipoprotein signal peptidase (152 aa).

Helical transmembrane passes span 55–75 (NKMW…VFYM) and 85–105 (LGIS…DRVF). Residues Asp-111 and Asp-129 contribute to the active site. The chain crosses the membrane as a helical span at residues 124-144 (VFNIADSALCIGVVLIIIQTL).

Belongs to the peptidase A8 family.

The protein localises to the cell membrane. It carries out the reaction Release of signal peptides from bacterial membrane prolipoproteins. Hydrolyzes -Xaa-Yaa-Zaa-|-(S,diacylglyceryl)Cys-, in which Xaa is hydrophobic (preferably Leu), and Yaa (Ala or Ser) and Zaa (Gly or Ala) have small, neutral side chains.. It functions in the pathway protein modification; lipoprotein biosynthesis (signal peptide cleavage). In terms of biological role, this protein specifically catalyzes the removal of signal peptides from prolipoproteins. In Bacillus cereus (strain B4264), this protein is Lipoprotein signal peptidase.